The chain runs to 98 residues: Cytochrome b (98 aa).

The next 3 helical transmembrane spans lie at 1 to 18 (LLGLCLITQILTGLFLAM), 42 to 63 (WLIRNVHANGASFFFICLYLHV), and 78 to 98 (WNIGVVLLLLTMMTAFVGYVL). Residues His-48 and His-62 each contribute to the heme b site.

Belongs to the cytochrome b family. The cytochrome bc1 complex contains 3 respiratory subunits (MT-CYB, CYC1 and UQCRFS1), 2 core proteins (UQCRC1 and UQCRC2) and probably 6 low-molecular weight proteins. Heme b serves as cofactor.

It is found in the mitochondrion inner membrane. Its function is as follows. Component of the ubiquinol-cytochrome c reductase complex (complex III or cytochrome b-c1 complex) that is part of the mitochondrial respiratory chain. The b-c1 complex mediates electron transfer from ubiquinol to cytochrome c. Contributes to the generation of a proton gradient across the mitochondrial membrane that is then used for ATP synthesis. The chain is Cytochrome b (mt-cyb) from Scaphirhynchus platorynchus (Shovelnose sturgeon).